A 276-amino-acid chain; its full sequence is Undecaprenyl-diphosphatase (276 aa).

7 consecutive transmembrane segments (helical) span residues 46 to 66 (AGAS…LIYF), 94 to 114 (LMGI…VKAI), 122 to 142 (LWVV…AERV), 152 to 172 (LGIG…IPGV), 196 to 216 (SFLL…IAEF), 226 to 246 (LGTL…IRFL), and 253 to 273 (VFIV…ALGF).

Belongs to the UppP family.

The protein resides in the cell inner membrane. The enzyme catalyses di-trans,octa-cis-undecaprenyl diphosphate + H2O = di-trans,octa-cis-undecaprenyl phosphate + phosphate + H(+). Catalyzes the dephosphorylation of undecaprenyl diphosphate (UPP). Confers resistance to bacitracin. This chain is Undecaprenyl-diphosphatase, found in Synechococcus sp. (strain JA-3-3Ab) (Cyanobacteria bacterium Yellowstone A-Prime).